Here is a 409-residue protein sequence, read N- to C-terminus: MSHPEAPITPEVEADLAIARRGCDELLVESEFARKLARSRATGVPLRIKLGLDPTAPDIHLGHTVVLNKMRQLQDLGHNVIFLIGDFTSTIGDPSGRNSTRPPLTREQIETNAKTYYAQASLVLDPARTEIRYNSEWCDPLGARGMIQLASRYTVARMMEREDFTRRFKGGVPIAVHEFLYPLLQGYDSVALKADLELGGTDQKFNLLVGRELQKEYGQEQQCILTMPLLVGTDGVEKMSKSKGNYIGISEAPESMFGKLMSISDTLMWRYYELLSFRSLADIAALKAEIDGGRNPRDAKVALAQEIVARFHSPQAAEAALAAFEARFRDGAIPEDMPEVTVGGAPQGILRILREAGLVASGSEAQRNVEQGGVRVNGDRVEDKSLQLSAGTYVVQVGKRKFARVKLVG.

A 'HIGH' region motif is present at residues 54–63; the sequence is PTAPDIHLGH. The 'KMSKS' region signature appears at 238–242; the sequence is KMSKS. Residue Lys241 participates in ATP binding. The S4 RNA-binding domain occupies 347 to 407; that stretch reads QGILRILREA…GKRKFARVKL (61 aa).

It belongs to the class-I aminoacyl-tRNA synthetase family. TyrS type 2 subfamily. Homodimer.

Its subcellular location is the cytoplasm. It carries out the reaction tRNA(Tyr) + L-tyrosine + ATP = L-tyrosyl-tRNA(Tyr) + AMP + diphosphate + H(+). In terms of biological role, catalyzes the attachment of tyrosine to tRNA(Tyr) in a two-step reaction: tyrosine is first activated by ATP to form Tyr-AMP and then transferred to the acceptor end of tRNA(Tyr). This chain is Tyrosine--tRNA ligase, found in Bordetella pertussis (strain Tohama I / ATCC BAA-589 / NCTC 13251).